Here is a 289-residue protein sequence, read N- to C-terminus: Syntaxin-3 (289 aa).

The Cytoplasmic portion of the chain corresponds to 1–263 (MKDRLEQLKA…MKYQGQARKK (263 aa)). The stretch at 32-111 (MDEFFSEIEE…IEEDEVRSSA (80 aa)) forms a coiled coil. The t-SNARE coiled-coil homology domain occupies 191 to 253 (LSEIEGRHKD…EKARDETKRA (63 aa)). A helical; Anchor for type IV membrane protein membrane pass occupies residues 264–284 (LIIIIVIVVVLLGILALIIGL). The Extracellular segment spans residues 285–289 (SVGLK).

It belongs to the syntaxin family. As to quaternary structure, interacts with REEP6. Interacts with PRPH2 in rod and cone photoreceptors. Interacts with ROM1. Interacts with SNAP25. Interacts with VAMP2. In terms of tissue distribution, heart, spleen, lung and kidney.

The protein resides in the membrane. Potentially involved in docking of synaptic vesicles at presynaptic active zones. Apical receptor involved in membrane fusion of apical vesicles. Essential for survival of retinal photoreceetors. This chain is Syntaxin-3 (Stx3), found in Rattus norvegicus (Rat).